Here is a 508-residue protein sequence, read N- to C-terminus: Ell-associated factor Eaf (508 aa).

Polar residues-rich tracts occupy residues 140-150 (GQGQLHSQGAN) and 161-190 (GHSTGTAPKMENSTMRISTKTKVSTGSRRN). 2 disordered regions span residues 140 to 226 (GQGQ…WDAN) and 251 to 508 (HNSG…DDDE). Phosphoserine is present on Ser-200. Positions 251-268 (HNSGHANTSGSSTGSATG) are enriched in low complexity. 2 stretches are compositionally biased toward polar residues: residues 272-281 (FGSTSSSSHM) and 296-313 (QQMQQRLSPPMAQQQQPS). The span at 314–341 (NYGRGYNGGHNHVQQQQQRNSPQQQRPP) shows a compositional bias: low complexity. Residues 391–406 (DSSDSDSGSDSDDSTE) show a composition bias toward acidic residues. Low complexity-rich tracts occupy residues 412 to 444 (QGQQQDHQQQQQQQVYQNHNHQQQQIAQQHLNQ), 461 to 477 (HQHQQQMAPHQQQQKQQ), and 489 to 502 (NDLLQNDLQLSSNS).

The protein belongs to the EAF family.

The protein localises to the nucleus. Its function is as follows. Promotes transcriptional elongation by Su(Tpl)/ELL. Essential for development. The chain is Ell-associated factor Eaf from Drosophila erecta (Fruit fly).